We begin with the raw amino-acid sequence, 367 residues long: Carbamoyl-phosphate synthase (367 aa).

The ATP-grasp domain occupies 111-296 (KEFYNEIGVP…SLCELVNMAA (186 aa)). 137-186 (KMEFPVVLKQGQGQGGKDIKVAESLDDVKEYFEEFDHALCEKFIEGSEIS) serves as a coordination point for ATP. Aspartate 253, glutamate 267, and asparagine 269 together coordinate Mg(2+). Aspartate 253, glutamate 267, and asparagine 269 together coordinate Mn(2+).

It belongs to the small carbamoyl-phosphate synthase family. Forms homodimers and homotetramers (dimers of dimers). Mg(2+) is required as a cofactor. Mn(2+) serves as cofactor.

It carries out the reaction hydrogencarbonate + NH4(+) + 2 ATP = carbamoyl phosphate + 2 ADP + phosphate + 2 H(+). In terms of biological role, catalyzes the synthesis of carbamoyl phosphate from ATP, ammonium and bicarbonate. Proceeds via a three-step mechanism, i.e. the phosphorylation of hydrogencarbonate to carboxyphosphate, a nucleophilic attack of ammonia on carboxyphosphate yielding carbamate, and the phosphorylation of carbamate forming carbamoyl phosphate. In M.smithii, the predominant archaeon in the human gut, one function of this enzyme may be to sequester ammonia, a scarce nutrient in the intestine which is the major source of nitrogen in M.smithii for the biosynthesis of nucleotides, amino acids, and many other metabolites. The protein is Carbamoyl-phosphate synthase of Methanobrevibacter smithii (strain ATCC 35061 / DSM 861 / OCM 144 / PS).